A 358-amino-acid chain; its full sequence is DNA primase large subunit PriL (358 aa).

4 residues coordinate [4Fe-4S] cluster: Cys234, Cys306, Cys315, and Cys322. The tract at residues 335-358 is disordered; that stretch reads KLDDTDEEELVDWREDEGEEEADA. Over residues 338-358 the composition is skewed to acidic residues; the sequence is DTDEEELVDWREDEGEEEADA.

This sequence belongs to the eukaryotic-type primase large subunit family. In terms of assembly, heterodimer of a small subunit (PriS) and a large subunit (PriL). The cofactor is [4Fe-4S] cluster.

Regulatory subunit of DNA primase, an RNA polymerase that catalyzes the synthesis of short RNA molecules used as primers for DNA polymerase during DNA replication. Stabilizes and modulates the activity of the small subunit, increasing the rate of DNA synthesis, and conferring RNA synthesis capability. The DNA polymerase activity may enable DNA primase to also catalyze primer extension after primer synthesis. May also play a role in DNA repair. In Haloarcula marismortui (strain ATCC 43049 / DSM 3752 / JCM 8966 / VKM B-1809) (Halobacterium marismortui), this protein is DNA primase large subunit PriL.